Here is a 173-residue protein sequence, read N- to C-terminus: Ribosome maturation factor RimM (173 aa).

Residues 98–170 (VGDMTWDSFI…SLTVSLPEGL (73 aa)) enclose the PRC barrel domain.

It belongs to the RimM family. In terms of assembly, binds ribosomal protein uS19.

It is found in the cytoplasm. Functionally, an accessory protein needed during the final step in the assembly of 30S ribosomal subunit, possibly for assembly of the head region. Essential for efficient processing of 16S rRNA. May be needed both before and after RbfA during the maturation of 16S rRNA. It has affinity for free ribosomal 30S subunits but not for 70S ribosomes. The chain is Ribosome maturation factor RimM from Parabacteroides distasonis (strain ATCC 8503 / DSM 20701 / CIP 104284 / JCM 5825 / NCTC 11152).